Here is a 295-residue protein sequence, read N- to C-terminus: Pyridoxal 5'-phosphate synthase subunit PdxS (295 aa).

Asp25 lines the D-ribose 5-phosphate pocket. Lys82 functions as the Schiff-base intermediate with D-ribose 5-phosphate in the catalytic mechanism. Gly154 provides a ligand contact to D-ribose 5-phosphate. Arg166 is a D-glyceraldehyde 3-phosphate binding site. Residues Gly215 and 236-237 each bind D-ribose 5-phosphate; that span reads GS.

This sequence belongs to the PdxS/SNZ family. In terms of assembly, in the presence of PdxT, forms a dodecamer of heterodimers.

It carries out the reaction aldehydo-D-ribose 5-phosphate + D-glyceraldehyde 3-phosphate + L-glutamine = pyridoxal 5'-phosphate + L-glutamate + phosphate + 3 H2O + H(+). It participates in cofactor biosynthesis; pyridoxal 5'-phosphate biosynthesis. Functionally, catalyzes the formation of pyridoxal 5'-phosphate from ribose 5-phosphate (RBP), glyceraldehyde 3-phosphate (G3P) and ammonia. The ammonia is provided by the PdxT subunit. Can also use ribulose 5-phosphate and dihydroxyacetone phosphate as substrates, resulting from enzyme-catalyzed isomerization of RBP and G3P, respectively. The protein is Pyridoxal 5'-phosphate synthase subunit PdxS of Haemophilus ducreyi (strain 35000HP / ATCC 700724).